The sequence spans 366 residues: Inactive PGL/p-HBAD biosynthesis glycosyltransferase Mb2982c (366 aa).

Disordered regions lie at residues 1 to 23 (MEETSVAGDPGPDAGTSTAPNAA) and 295 to 366 (DGDR…HGGP). Residues 295–311 (DGDRGHRWPEPPEERAG) are compositionally biased toward basic and acidic residues.

This sequence belongs to the UDP-glycosyltransferase family.

In Mycobacterium bovis (strain ATCC BAA-935 / AF2122/97), this protein is Inactive PGL/p-HBAD biosynthesis glycosyltransferase Mb2982c.